A 332-amino-acid polypeptide reads, in one-letter code: Malate dehydrogenase, cytoplasmic (332 aa).

NAD(+) is bound by residues 16-17 (QI), D43, and G90. R99 provides a ligand contact to oxaloacetate. Residues Q113 and N132 each contribute to the NAD(+) site. Oxaloacetate-binding residues include N132, R163, H188, and S243. Catalysis depends on H188, which acts as the Proton acceptor.

It belongs to the LDH/MDH superfamily. MDH type 2 family. As to quaternary structure, homodimer.

Its subcellular location is the cytoplasm. The enzyme catalyses (S)-malate + NAD(+) = oxaloacetate + NADH + H(+). The chain is Malate dehydrogenase, cytoplasmic (CMDH) from Medicago sativa (Alfalfa).